The following is a 389-amino-acid chain: Exodeoxyribonuclease 7 large subunit (389 aa).

This sequence belongs to the XseA family. In terms of assembly, heterooligomer composed of large and small subunits.

The protein resides in the cytoplasm. It carries out the reaction Exonucleolytic cleavage in either 5'- to 3'- or 3'- to 5'-direction to yield nucleoside 5'-phosphates.. Its function is as follows. Bidirectionally degrades single-stranded DNA into large acid-insoluble oligonucleotides, which are then degraded further into small acid-soluble oligonucleotides. The chain is Exodeoxyribonuclease 7 large subunit from Pseudothermotoga lettingae (strain ATCC BAA-301 / DSM 14385 / NBRC 107922 / TMO) (Thermotoga lettingae).